We begin with the raw amino-acid sequence, 146 residues long: Hemoglobin subunit beta-2 (146 aa).

A Globin domain is found at 2 to 146; sequence KWTDKERAVI…VVSALGKQYC (145 aa). Residues H63 and H92 each coordinate heme b.

Belongs to the globin family. In terms of assembly, heterotetramer of two alpha chains and two beta chains. In terms of tissue distribution, red blood cells.

Its function is as follows. Involved in oxygen transport from gills to the various peripheral tissues. The polypeptide is Hemoglobin subunit beta-2 (hbb2) (Lycodes reticulatus (Arctic eelpout)).